The primary structure comprises 239 residues: 1-(5-phosphoribosyl)-5-[(5-phosphoribosylamino)methylideneamino] imidazole-4-carboxamide isomerase (239 aa).

Catalysis depends on Asp8, which acts as the Proton acceptor. Asp129 acts as the Proton donor in catalysis.

Belongs to the HisA/HisF family.

It localises to the cytoplasm. The catalysed reaction is 1-(5-phospho-beta-D-ribosyl)-5-[(5-phospho-beta-D-ribosylamino)methylideneamino]imidazole-4-carboxamide = 5-[(5-phospho-1-deoxy-D-ribulos-1-ylimino)methylamino]-1-(5-phospho-beta-D-ribosyl)imidazole-4-carboxamide. It participates in amino-acid biosynthesis; L-histidine biosynthesis; L-histidine from 5-phospho-alpha-D-ribose 1-diphosphate: step 4/9. This is 1-(5-phosphoribosyl)-5-[(5-phosphoribosylamino)methylideneamino] imidazole-4-carboxamide isomerase from Paramagnetospirillum magneticum (strain ATCC 700264 / AMB-1) (Magnetospirillum magneticum).